The chain runs to 771 residues: Caldesmon (771 aa).

2 disordered regions span residues 23-91 and 104-599; these read ERLS…ALLE and LQEA…FSPK. Positions 26 to 199 are myosin and calmodulin-binding; sequence SYQRNDDDEE…PKEVPTEENQ (174 aa). A Phosphotyrosine modification is found at tyrosine 27. Basic and acidic residues-rich tracts occupy residues 47–67, 104–115, 139–155, 170–194, 203–215, 240–435, 442–484, 509–518, and 525–592; these read QERL…EKSE, LQEALERQKEFD, ITGK…RCEI, WRQD…KEVP, AVEK…EVVE, AADK…ESLP, SKKD…RELT, GSEKLKEKQQ, and DELK…EKKP. A run of 10 repeats spans residues 251–265, 266–278, 279–291, 294–306, 309–321, 324–336, 337–349, 350–362, 363–375, and 378–390. The interval 251-390 is 10 X 13 AA approximate tandem repeats; sequence EREKLEAEEK…KRAAEEKARL (140 aa). A tropomyosin-binding region spans residues 523 to 580; sequence ELDELKKRREERRKILEEEEQKKKQEEAERKIREEEEKKRMKEEIERRRAEAAEKRQK. Serine 597 is modified (phosphoserine; by CDK1). The segment at 612 to 644 is strong actin-binding; that stretch reads LNKSAQKSGMKPAHTTAVVSKIDSRLEQYTSAV. Residues 622-632 are tropomyosin-binding; the sequence is KPAHTTAVVSK. Residue tyrosine 640 is modified to Phosphotyrosine. Residues 674 to 680 are calmodulin-binding; sequence WEKGNVF. Positions 676 to 771 are disordered; the sequence is KGNVFSSPGG…NGLRQFEKEP (96 aa). Residues 679-691 show a composition bias toward polar residues; the sequence is VFSSPGGTGTPNK. At serine 682 the chain carries Phosphoserine; by CDK1. Residues threonine 688 and threonine 711 each carry the phosphothreonine; by CDK1 modification. A Phosphoserine; by CDK1 modification is found at serine 717. The span at 723-742 shows a compositional bias: basic and acidic residues; that stretch reads SDLRPGDVSGKRNLWEKQSV. The weak actin-binding stretch occupies residues 726–752; it reads RPGDVSGKRNLWEKQSVEKPAASSSKV.

This sequence belongs to the caldesmon family. Post-translationally, phosphorylated in non-muscle cells. Phosphorylation by CDK1 during mitosis causes caldesmon to dissociate from microfilaments. Phosphorylation reduces caldesmon binding to actin, myosin, and calmodulin as well as its inhibition of actomyosin ATPase activity. Phosphorylation also occurs in both quiescent and dividing smooth muscle cells with similar effects on the interaction with actin and calmodulin and on microfilaments reorganization. In terms of tissue distribution, high-molecular-weight caldesmon (h-caldesmon) is predominantly expressed in smooth muscles, whereas low-molecular-weight caldesmon (l-caldesmon) is widely distributed in non-muscle tissues and cells. Not expressed in skeletal muscle or heart.

It is found in the cytoplasm. The protein resides in the cytoskeleton. It localises to the myofibril. The protein localises to the stress fiber. Actin- and myosin-binding protein implicated in the regulation of actomyosin interactions in smooth muscle and nonmuscle cells (could act as a bridge between myosin and actin filaments). Stimulates actin binding of tropomyosin which increases the stabilization of actin filament structure. In muscle tissues, inhibits the actomyosin ATPase by binding to F-actin. This inhibition is attenuated by calcium-calmodulin and is potentiated by tropomyosin. Interacts with actin, myosin, two molecules of tropomyosin and with calmodulin. Also plays an essential role during cellular mitosis and receptor capping. The chain is Caldesmon (CALD1) from Gallus gallus (Chicken).